The chain runs to 562 residues: Dihydroxy-acid dehydratase (562 aa).

Residue Asp80 participates in Mg(2+) binding. A [2Fe-2S] cluster-binding site is contributed by Cys121. Positions 122 and 123 each coordinate Mg(2+). Lys123 carries the N6-carboxylysine modification. Cys194 lines the [2Fe-2S] cluster pocket. Glu446 contacts Mg(2+). Catalysis depends on Ser472, which acts as the Proton acceptor.

This sequence belongs to the IlvD/Edd family. Homodimer. Requires [2Fe-2S] cluster as cofactor. The cofactor is Mg(2+).

It carries out the reaction (2R)-2,3-dihydroxy-3-methylbutanoate = 3-methyl-2-oxobutanoate + H2O. It catalyses the reaction (2R,3R)-2,3-dihydroxy-3-methylpentanoate = (S)-3-methyl-2-oxopentanoate + H2O. Its pathway is amino-acid biosynthesis; L-isoleucine biosynthesis; L-isoleucine from 2-oxobutanoate: step 3/4. It functions in the pathway amino-acid biosynthesis; L-valine biosynthesis; L-valine from pyruvate: step 3/4. Functionally, functions in the biosynthesis of branched-chain amino acids. Catalyzes the dehydration of (2R,3R)-2,3-dihydroxy-3-methylpentanoate (2,3-dihydroxy-3-methylvalerate) into 2-oxo-3-methylpentanoate (2-oxo-3-methylvalerate) and of (2R)-2,3-dihydroxy-3-methylbutanoate (2,3-dihydroxyisovalerate) into 2-oxo-3-methylbutanoate (2-oxoisovalerate), the penultimate precursor to L-isoleucine and L-valine, respectively. This is Dihydroxy-acid dehydratase from Staphylococcus aureus (strain USA300 / TCH1516).